A 79-amino-acid polypeptide reads, in one-letter code: Small ribosomal subunit protein bS18 (79 aa).

The protein belongs to the bacterial ribosomal protein bS18 family. As to quaternary structure, part of the 30S ribosomal subunit. Forms a tight heterodimer with protein bS6.

In terms of biological role, binds as a heterodimer with protein bS6 to the central domain of the 16S rRNA, where it helps stabilize the platform of the 30S subunit. The polypeptide is Small ribosomal subunit protein bS18 (Nitrobacter hamburgensis (strain DSM 10229 / NCIMB 13809 / X14)).